Here is a 90-residue protein sequence, read N- to C-terminus: Probable Fe(2+)-trafficking protein (90 aa).

The protein belongs to the Fe(2+)-trafficking protein family.

In terms of biological role, could be a mediator in iron transactions between iron acquisition and iron-requiring processes, such as synthesis and/or repair of Fe-S clusters in biosynthetic enzymes. This chain is Probable Fe(2+)-trafficking protein, found in Dechloromonas aromatica (strain RCB).